Consider the following 139-residue polypeptide: Large ribosomal subunit protein uL22 (139 aa).

A disordered region spans residues 1–21; it reads MTAPEQTYRNKKQRKQQHKLR. Basic residues predominate over residues 9 to 21; the sequence is RNKKQRKQQHKLR.

This sequence belongs to the universal ribosomal protein uL22 family. As to quaternary structure, part of the 50S ribosomal subunit.

Functionally, this protein binds specifically to 23S rRNA; its binding is stimulated by other ribosomal proteins, e.g. L4, L17, and L20. It is important during the early stages of 50S assembly. It makes multiple contacts with different domains of the 23S rRNA in the assembled 50S subunit and ribosome. In terms of biological role, the globular domain of the protein is located near the polypeptide exit tunnel on the outside of the subunit, while an extended beta-hairpin is found that lines the wall of the exit tunnel in the center of the 70S ribosome. In Deinococcus geothermalis (strain DSM 11300 / CIP 105573 / AG-3a), this protein is Large ribosomal subunit protein uL22.